Here is a 251-residue protein sequence, read N- to C-terminus: Triosephosphate isomerase (251 aa).

9–11 (NWK) serves as a coordination point for substrate. Histidine 95 (electrophile) is an active-site residue. Glutamate 167 acts as the Proton acceptor in catalysis. Residues glycine 173, serine 213, and 234–235 (GG) contribute to the substrate site.

This sequence belongs to the triosephosphate isomerase family. As to quaternary structure, homodimer.

The protein resides in the cytoplasm. It carries out the reaction D-glyceraldehyde 3-phosphate = dihydroxyacetone phosphate. It functions in the pathway carbohydrate biosynthesis; gluconeogenesis. It participates in carbohydrate degradation; glycolysis; D-glyceraldehyde 3-phosphate from glycerone phosphate: step 1/1. Involved in the gluconeogenesis. Catalyzes stereospecifically the conversion of dihydroxyacetone phosphate (DHAP) to D-glyceraldehyde-3-phosphate (G3P). The protein is Triosephosphate isomerase of Pelobacter propionicus (strain DSM 2379 / NBRC 103807 / OttBd1).